The chain runs to 979 residues: Pheromone-regulated membrane protein 10 (979 aa).

Disordered regions lie at residues 1–279, 295–318, 337–411, 432–451, and 491–528; these read MGKS…FFSK, LRNVNLHPEADPEKNSVQEAEVDG, YSSL…PQRV, FSTASSIGEEPAKPSKPLLD, and ATKHYPGRKNEEASGSNSELPSFKNTRPKKNKKHLPKF. Basic and acidic residues predominate over residues 15–26; that stretch reads GGKDARSPETRS. The segment covering 29–38 has biased composition (low complexity); sequence SRSSTDNRSS. The span at 54-68 shows a compositional bias: acidic residues; the sequence is LDLEEGVDDDADFDW. A compositionally biased stretch (polar residues) spans 77–86; it reads DAQSLDNPFN. A compositionally biased stretch (basic and acidic residues) spans 105–115; the sequence is AIERDAVDTIR. Over residues 122 to 135 the composition is skewed to acidic residues; that stretch reads EEPDSASDGEDVGM. 2 stretches are compositionally biased toward basic and acidic residues: residues 138-148 and 158-175; these read EYQRKRERLVD and SPRRESREGKNVRFHTET. Positions 192–213 are enriched in polar residues; that stretch reads EAGTGTNENGEASSSGMKSSIN. Residues 253-263 are compositionally biased toward basic and acidic residues; it reads GAEKGMKSMKD. Residues 360-372 show a composition bias toward low complexity; that stretch reads SPSTPSSSPGPES. Positions 379–395 are enriched in acidic residues; sequence DDYDFDQVDSDGEDSDL. Over residues 503–515 the composition is skewed to polar residues; that stretch reads ASGSNSELPSFKN. Residues 516-528 show a composition bias toward basic residues; sequence TRPKKNKKHLPKF. 10 consecutive transmembrane segments (helical) span residues 658-678, 680-700, 710-730, 734-754, 773-793, 809-829, 832-852, 864-884, 886-906, and 946-966; these read WVCVLLYGFCSAMVTPYAFGG, WVNLAVSFFIGTCVGALQFIV, VFEISASIVVSFVGRAFGSIG, ICFGAVTQGSLALILPGYIIL, FYAIIYSLFLSFGITLGAALF, PISPWYRFLFVPAFTIGISLI, AHWIQLPVMVTISCTGYVVTY, FTASLAAFVIGIMGNLYSRVW, GLAVSAMLPAIFVQVPSGVAS, and ITMIQVSIGITVGLFGSSLIV.

It belongs to the ThrE exporter (TC 2.A.79) family.

The protein localises to the membrane. This chain is Pheromone-regulated membrane protein 10, found in Zygosaccharomyces rouxii (strain ATCC 2623 / CBS 732 / NBRC 1130 / NCYC 568 / NRRL Y-229).